A 333-amino-acid chain; its full sequence is Casein kinase II subunit alpha-2 (333 aa).

Residues 34–319 (YEVVRKVGRG…AREAMAHPYF (286 aa)) form the Protein kinase domain. Residues 40–48 (VGRGKYSEV) and Lys-63 each bind ATP. Asp-151 acts as the Proton acceptor in catalysis.

Belongs to the protein kinase superfamily. Ser/Thr protein kinase family. CK2 subfamily. As to quaternary structure, monomer. In terms of processing, autophosphorylated.

It is found in the cytoplasm. The catalysed reaction is L-seryl-[protein] + ATP = O-phospho-L-seryl-[protein] + ADP + H(+). The enzyme catalyses L-threonyl-[protein] + ATP = O-phospho-L-threonyl-[protein] + ADP + H(+). In terms of biological role, casein kinases are operationally defined by their preferential utilization of acidic proteins such as caseins as substrates. It can phosphorylate a large number of proteins. Involved in photoperiod sensitivity (PS). Increases days-to-heading under natural day (ND) and long day (LD) conditions, but not under short day (SD) conditions. This Oryza sativa subsp. indica (Rice) protein is Casein kinase II subunit alpha-2.